The following is a 51-amino-acid chain: Glutamate dehydrogenase (51 aa).

Residue K31 coordinates substrate.

This sequence belongs to the Glu/Leu/Phe/Val dehydrogenases family. Homohexamer.

It is found in the mitochondrion matrix. It carries out the reaction L-glutamate + NAD(+) + H2O = 2-oxoglutarate + NH4(+) + NADH + H(+). The catalysed reaction is L-glutamate + NADP(+) + H2O = 2-oxoglutarate + NH4(+) + NADPH + H(+). Its function is as follows. Mitochondrial glutamate dehydrogenase that converts L-glutamate into alpha-ketoglutarate. Plays a key role in glutamine anaplerosis by producing alpha-ketoglutarate, an important intermediate in the tricarboxylic acid cycle. The chain is Glutamate dehydrogenase from Electrophorus electricus (Electric eel).